The sequence spans 362 residues: Alcohol dehydrogenase 13 (362 aa).

7 residues coordinate Zn(2+): Cys-51, His-73, Cys-104, Cys-107, Cys-110, Cys-118, and Cys-168. His-73 is a binding site for substrate. Residues 193–198 (GLGGLG) and 280–282 (VGA) each bind NAD(+).

Belongs to the zinc-containing alcohol dehydrogenase family. Class-III subfamily. Homodimer. Zn(2+) serves as cofactor.

This is Alcohol dehydrogenase 13 from Catharanthus roseus (Madagascar periwinkle).